Here is a 213-residue protein sequence, read N- to C-terminus: Peroxynitrite isomerase (213 aa).

Over residues 1–10 (MGADATGDTA) the composition is skewed to low complexity. The interval 1 to 26 (MGADATGDTAARGDRAAHGDTASGGA) is disordered. Positions 51-57 (GTWRGEG) match the GXWXGXG motif. Histidine 203 provides a ligand contact to heme b.

Belongs to the nitrobindin family. In terms of assembly, homodimer. Requires heme b as cofactor.

It catalyses the reaction peroxynitrite = nitrate. Its pathway is nitrogen metabolism. In terms of biological role, heme-binding protein able to scavenge peroxynitrite and to protect free L-tyrosine against peroxynitrite-mediated nitration, by acting as a peroxynitrite isomerase that converts peroxynitrite to nitrate. Therefore, this protein likely plays a role in peroxynitrite sensing and in the detoxification of reactive nitrogen and oxygen species (RNS and ROS, respectively). Is able to bind nitric oxide (NO) in vitro, but may act as a sensor of peroxynitrite levels in vivo. In Parafrankia sp. (strain EAN1pec), this protein is Peroxynitrite isomerase.